We begin with the raw amino-acid sequence, 225 residues long: PKHD-type hydroxylase Smal_0990 (225 aa).

The Fe2OG dioxygenase domain occupies 78–177; sequence KYLPPRFNRY…RVASFFWVQS (100 aa). Fe cation-binding residues include His-96, Asp-98, and His-158. Arg-168 contributes to the 2-oxoglutarate binding site.

It depends on Fe(2+) as a cofactor. L-ascorbate is required as a cofactor.

The polypeptide is PKHD-type hydroxylase Smal_0990 (Stenotrophomonas maltophilia (strain R551-3)).